The chain runs to 150 residues: Large ribosomal subunit protein bL9 (150 aa).

It belongs to the bacterial ribosomal protein bL9 family.

Binds to the 23S rRNA. The protein is Large ribosomal subunit protein bL9 of Pectobacterium atrosepticum (strain SCRI 1043 / ATCC BAA-672) (Erwinia carotovora subsp. atroseptica).